The primary structure comprises 492 residues: Phytoene desaturase (lycopene-forming) (492 aa).

5 to 38 (TVIGAGFGGLALAIRLQAAGIPVLLLEQRDKPGG) contributes to the FAD binding site.

This sequence belongs to the carotenoid/retinoid oxidoreductase family. It depends on FAD as a cofactor.

The protein resides in the cell membrane. It carries out the reaction 15-cis-phytoene + 4 A = all-trans-lycopene + 4 AH2. The protein operates within carotenoid biosynthesis; lycopene biosynthesis. With respect to regulation, inhibited by NAD and NADP. Functionally, converts 15-cis-phytoene into all-trans-lycopene via the intermediary of all-trans-phytofluene, all-trans-zeta-carotene and all-trans-neurosporene, by the introduction of four double bonds. The chain is Phytoene desaturase (lycopene-forming) (crtI) from Pantoea ananas (Erwinia uredovora).